We begin with the raw amino-acid sequence, 184 residues long: Der GTPase-activating protein YihI (184 aa).

Disordered stretches follow at residues 1–106 (MNRP…PTMS) and 159–184 (LGDD…KDAL). Residues 8-32 (VADKAEKSKVKRKTREELEREARER) are compositionally biased toward basic and acidic residues. Acidic residues predominate over residues 159 to 169 (LGDDDEEEQQE).

This sequence belongs to the YihI family. In terms of assembly, interacts with Der.

In terms of biological role, a GTPase-activating protein (GAP) that modifies Der/EngA GTPase function. May play a role in ribosome biogenesis. The sequence is that of Der GTPase-activating protein YihI from Pectobacterium atrosepticum (strain SCRI 1043 / ATCC BAA-672) (Erwinia carotovora subsp. atroseptica).